Consider the following 701-residue polypeptide: Elongation factor G (701 aa).

The 284-residue stretch at 8–291 (SRYRNIGIVA…AVIDYLPAPI (284 aa)) folds into the tr-type G domain. GTP contacts are provided by residues 17–24 (AHVDAGKT), 89–93 (DTPGH), and 143–146 (NKMD).

It belongs to the TRAFAC class translation factor GTPase superfamily. Classic translation factor GTPase family. EF-G/EF-2 subfamily.

The protein resides in the cytoplasm. In terms of biological role, catalyzes the GTP-dependent ribosomal translocation step during translation elongation. During this step, the ribosome changes from the pre-translocational (PRE) to the post-translocational (POST) state as the newly formed A-site-bound peptidyl-tRNA and P-site-bound deacylated tRNA move to the P and E sites, respectively. Catalyzes the coordinated movement of the two tRNA molecules, the mRNA and conformational changes in the ribosome. This is Elongation factor G from Pseudomonas syringae pv. tomato (strain ATCC BAA-871 / DC3000).